The following is a 197-amino-acid chain: dITP/XTP pyrophosphatase (197 aa).

8–13 (TGNPGK) lines the substrate pocket. Mg(2+) is bound by residues glutamate 40 and aspartate 69. Aspartate 69 acts as the Proton acceptor in catalysis. Residues serine 70, 154–157 (FGYD), lysine 177, and 182–183 (HR) contribute to the substrate site.

This sequence belongs to the HAM1 NTPase family. As to quaternary structure, homodimer. Requires Mg(2+) as cofactor.

The catalysed reaction is XTP + H2O = XMP + diphosphate + H(+). The enzyme catalyses dITP + H2O = dIMP + diphosphate + H(+). It carries out the reaction ITP + H2O = IMP + diphosphate + H(+). Its function is as follows. Pyrophosphatase that catalyzes the hydrolysis of nucleoside triphosphates to their monophosphate derivatives, with a high preference for the non-canonical purine nucleotides XTP (xanthosine triphosphate), dITP (deoxyinosine triphosphate) and ITP. Seems to function as a house-cleaning enzyme that removes non-canonical purine nucleotides from the nucleotide pool, thus preventing their incorporation into DNA/RNA and avoiding chromosomal lesions. The polypeptide is dITP/XTP pyrophosphatase (Yersinia pseudotuberculosis serotype I (strain IP32953)).